The primary structure comprises 451 residues: BSD domain-containing protein 1 (451 aa).

The region spanning 146–198 is the BSD domain; sequence WLSRFSLEEKKGEIAELLATSPSIRALYTKMVPAAVSHSEFWQRYFYKVHRLE. 2 disordered regions span residues 252 to 296 and 309 to 424; these read SAAL…SLVT and LQTG…DLDM. Low complexity predominate over residues 275–295; the sequence is PPELAPAEGSPSESSESVSLV. Positions 309–320 are enriched in polar residues; that stretch reads LQTGVQPSGNRD. The span at 365–388 shows a compositional bias: basic and acidic residues; that stretch reads KEVESKAQGRTETLKEEGPTDLRV. The span at 392–411 shows a compositional bias: polar residues; sequence NSDSGKSTPSNNGKKGSSTD. The segment covering 412–424 has biased composition (acidic residues); the sequence is ISEDWEKDFDLDM.

The chain is BSD domain-containing protein 1 (BSDC1) from Gallus gallus (Chicken).